A 338-amino-acid chain; its full sequence is MADTAPQLKRKREQEAEEAETPSTEEKEAGVGNGTSAPVRLPFSGFRVQKVLRESARDKIIFLHGKVNEDSGDTHGEDAVVILEKTPFQVEHVAQLLTGSPELKLQFSNDIYSTYNLFPPRHLSDIKTTVVYPATEKHLQKYMRQDLRLIRETGDDYRTITLPYLESQSLSIQWVYNILDKKAEADRIVFENPDPSDGFVLIPDLKWNQQQLDDLYLIAICHRRGIRSLRDLTPEHLPLLRNILREGQEAILKRYQVTGDRLRVYLHYLPSYYHLHVHFTALGFEAPGSGVERAHLLAQVIENLECDPKHYQQRTLTFALRTDDPLLQLLQKAQQERN.

The tract at residues 1-36 is disordered; sequence MADTAPQLKRKREQEAEEAETPSTEEKEAGVGNGTS. Alanine 2 carries the N-acetylalanine modification. Positions 9–12 match the nuclear localization signal (NLS) motif; that stretch reads KRKR. 2 positions are modified to phosphoserine: serine 23 and serine 100. N6-acetyllysine is present on residues lysine 137 and lysine 141. Positions 141 to 153 match the nuclear export sequence (NES) motif; sequence KYMRQDLRLIRET. Substrate is bound by residues tryptophan 174, glutamate 184, aspartate 204, lysine 206, and 267–278; that span reads HYLPSYYHLHVH. A Histidine triad motif motif is present at residues 274-278; sequence HLHVH. The Nucleophile role is filled by histidine 276.

Belongs to the HIT family. In terms of assembly, homodimer. Associates with components of the exosome multienzyme ribonuclease complex, such as EXOSC3 and EXOSC4. Interacts with NDOR1.

It is found in the cytoplasm. The protein resides in the nucleus. The catalysed reaction is a 5'-end (N(7)-methyl 5'-triphosphoguanosine)-ribonucleoside in mRNA + H2O = N(7)-methyl-GMP + a 5'-end diphospho-ribonucleoside in mRNA + 2 H(+). The hydrolytic product 7-methylguanosine diphosphate (m7GDP) efficiently inhibits the decapping scavenger activity and acts as a competitive inhibitor in vitro. Inhibited by 2,4-diaminoquinazoline. Functionally, decapping scavenger enzyme that catalyzes the cleavage of a residual cap structure following the degradation of mRNAs by the 3'-&gt;5' exosome-mediated mRNA decay pathway. Hydrolyzes cap analog structures like 7-methylguanosine nucleoside triphosphate (m7GpppG) with up to 10 nucleotide substrates (small capped oligoribonucleotides) and specifically releases 5'-phosphorylated RNA fragments and 7-methylguanosine monophosphate (m7GMP). Cleaves cap analog structures like tri-methyl guanosine nucleoside triphosphate (m3(2,2,7)GpppG) with very poor efficiency. Does not hydrolyze unmethylated cap analog (GpppG) and shows no decapping activity on intact m7GpppG-capped mRNA molecules longer than 25 nucleotides. Does not hydrolyze 7-methylguanosine diphosphate (m7GDP) to m7GMP. May also play a role in the 5'-&gt;3 mRNA decay pathway; m7GDP, the downstream product released by the 5'-&gt;3' mRNA mediated decapping activity, may be also converted by DCPS to m7GMP. Binds to m7GpppG and strongly to m7GDP. Plays a role in first intron splicing of pre-mRNAs. Inhibits activation-induced cell death. The sequence is that of m7GpppX diphosphatase (Dcps) from Mus musculus (Mouse).